A 427-amino-acid chain; its full sequence is MNKSERLYEQAKTLIPGGVNSPVRAFTGVGGTPLFIERADGAHLYDADGKAYIDYVGSWGPMILGHNHPVIRDAVIAAVGRGLSFGAPTEMEVRMAELVTSLIDSMDMVRMVNSGTEATMSAIRLARGFTGRDKLIKFEGCYHGHADHLLVKAGSGALTLGQPNSPGVPADFAKHTLTCSYNDLDSVRAAFARYPQEIACIIVEPVAGNMNCIPPQPGFLQGLRELCDQYGALLIIDEVMTGFRVALGGAQEYYDVTPDLTCLGKIIGGGMPVGAFGGRREVMEALAPTGPIYQAGTLSGNPVAMAAGYACLNEINQPGIYPQLAELTDNLAEGLLAAAREEKIPLVVNHVGGMFGIFFTDQPSVTCYQDVLRCDAERFKRFFHLMLEQGIYLAPSAFEAGFMSLAHSQEDIQKTIDAARCSFAKLK.

N6-(pyridoxal phosphate)lysine is present on Lys265.

It belongs to the class-III pyridoxal-phosphate-dependent aminotransferase family. HemL subfamily. Homodimer. It depends on pyridoxal 5'-phosphate as a cofactor.

Its subcellular location is the cytoplasm. The enzyme catalyses (S)-4-amino-5-oxopentanoate = 5-aminolevulinate. Its pathway is porphyrin-containing compound metabolism; protoporphyrin-IX biosynthesis; 5-aminolevulinate from L-glutamyl-tRNA(Glu): step 2/2. The protein is Glutamate-1-semialdehyde 2,1-aminomutase of Edwardsiella ictaluri (strain 93-146).